The sequence spans 711 residues: MTAIFPNSNIPFYYWASTNAQPQQPQQSIQQQQQQQQQQQQQQQQQQQQQQHHHHQNIPPTPQPIFSPQLINKNFGCYGTSNQIPMIPQALFPQQTFNYSGLPLCPSPPNYNNYHTITNSPPHQIHSPQLTIDQHSPPTCVSGELSPTPLSSSTGFSNNNNNNNNNNNNNNNSNSNNNINNNNNNNIKRSYSAMMEENNYPNNNNNNNNNNNNNNNNNNNNNNNNNNNNNNIINNNINSSGSISSYSNNSCIEDDYSSDKHCSDKESSNDCDDDADSYFEEYEDDQEAIRVSITPFVNLICKTPGITIPIIKIFSECSKEEITVKQMLLKVSLFLKIIIKIKIKIKIKILIFYFLFFKKIKNLCLEFNLDNSIHNTLIHSLVKIDGDIKMVKYLIDNGISEQELEFTKDILLTSNSQEIIKKKRERKRESISRGIRSPPNKWTKEESQNLIKLVTENGDKQWKKIATKLGGGKTGAQCAQHWKRVLSPEIKKGSWDEAEEELLFQLVDKHGQSWKNVAIEIKTRTDIQCRYQYFKAIMSRQTEWNQLEDDILTKKIKLMTQNNEKISFQQVSKHLARAKTTKIPRTALECKSRWSQLNSTNVNNNNNNNNNSITTSSSNTNQQQQSTMVTPTSSPLSSPIPMSTPIINNSMPQQQVQQIQQQQISIQPYPQSFIQETQGFYRGNDQMQYHIQNQTIPQYHHQHNNNPLLML.

Positions 24–50 are enriched in low complexity; the sequence is QPQQSIQQQQQQQQQQQQQQQQQQQQQ. 2 disordered regions span residues 24 to 70 and 113 to 235; these read QPQQ…SPQL and NYHT…IINN. 2 stretches are compositionally biased toward polar residues: residues 113-139 and 148-157; these read NYHT…SPPT and TPLSSSTGFS. Composition is skewed to low complexity over residues 158–187 and 198–235; these read NNNN…NNNI and NNYP…IINN. 2 HTH myb-type domains span residues 428–490 and 491–542; these read RESI…SPEI and KKGS…SRQT. 2 consecutive DNA-binding regions (H-T-H motif) follow at residues 462–486 and 514–538; these read WKKI…KRVL and WKNV…KAIM. The region spanning 540 to 598 is the Myb-like domain; sequence RQTEWNQLEDDILTKKIKLMTQNNEKISFQQVSKHLARAKTTKIPRTALECKSRWSQLN. A disordered region spans residues 598–640; it reads NSTNVNNNNNNNNNSITTSSSNTNQQQQSTMVTPTSSPLSSPI.

It is found in the nucleus. Its function is as follows. Transcriptional activator that initiates multicellular development by induction of adenylyl cyclase expression. In Dictyostelium discoideum (Social amoeba), this protein is Myb-like protein B (mybB).